A 602-amino-acid polypeptide reads, in one-letter code: NAD-dependent protein deacetylase sir-2.1 (602 aa).

The segment at 25-57 (PEIETMHIENSVEGESGRQRTESTASVNSESWQ) is disordered. The segment covering 46-57 (ESTASVNSESWQ) has biased composition (polar residues). The region spanning 119-374 (KLFTYNSLSD…RDICYALGGS (256 aa)) is the Deacetylase sirtuin-type domain. Residues 144–163 (GAGV…DGIY) and 228–231 (QNID) each bind NAD(+). His246 (proton acceptor) is an active-site residue. 4 residues coordinate Zn(2+): Cys254, Cys257, Cys278, and Cys281. NAD(+) contacts are provided by residues 318–320 (GSS), 343–345 (NRE), and Cys360. Disordered regions lie at residues 411–468 (QERR…SDEV) and 520–551 (RNRH…RSQS).

Belongs to the sirtuin family. Class I subfamily. Interacts with ftt-2 and par-5. Interacts with daf-16 following heat-shock, which causes daf-16 to accumulate in the nucleus. Interaction with daf-16 is promoted by ftt-2. Zn(2+) serves as cofactor.

The protein localises to the nucleus. It catalyses the reaction N(6)-acetyl-L-lysyl-[protein] + NAD(+) + H2O = 2''-O-acetyl-ADP-D-ribose + nicotinamide + L-lysyl-[protein]. Its function is as follows. NAD-dependent deacetylase. Required for a reduction of the 'Lys-16' acetylation of histone H4 (H4K16ac) on dosage-compensated X chromosomes in hermaphrodites. Functions upstream of daf-16 in the insulin-like signaling pathway, promoting daf-16 mediated transcriptional activation and increased life-span. May also regulate life-span independently of daf-16 by modulating the transcription of genes involved in the stress response of the endoplasmic reticulum (ER). Acts upstream of the nicotinic acid metabolism pathway, which may be linked to the regulation of longevity. Plays a role in ascaroside-mediated longevity and stress resistance. The chain is NAD-dependent protein deacetylase sir-2.1 (sir-2.1) from Caenorhabditis briggsae.